Consider the following 1118-residue polypeptide: MEIKDQGAQMEPLLPTRNDEEAVVDRGGTRSILKTHFEKEDLEGHRTLFIGVHVPLGGRKSHRRHRHRGHKHRKRDRERDSGLEDGRESPSFDTPSQRVQFILGTEDDDEEHIPHDLFTELDEICWREGEDAEWRETARWLKFEEDVEDGGERWSKPYVATLSLHSLFELRSCILNGTVLLDMHANTLEEIADMVLDQQVSSGQLNEDVRHRVHEALMKQHHHQNQKKLTNRIPIVRSFADIGKKQSEPNSMDKNAGQVVSPQSAPACVENKNDVSRENSTVDFSKGLGGQQKGHTSPCGMKQRHEKGPPHQQEREVDLHFMKKIPPGAEASNILVGELEFLDRTVVAFVRLSPAVLLQGLAEVPIPTRFLFILLGPLGKGQQYHEIGRSIATLMTDEVFHDVAYKAKDRNDLVSGIDEFLDQVTVLPPGEWDPSIRIEPPKNVPSQEKRKIPAVPNGTAAHGEAEPHGGHSGPELQRTGRIFGGLILDIKRKAPYFWSDFRDAFSLQCLASFLFLYCACMSPVITFGGLLGEATEGRISAIESLFGASMTGIAYSLFGGQPLTILGSTGPVLVFEKILFKFCKEYGLSYLSLRASIGLWTATLCIILVATDASSLVCYITRFTEEAFASLICIIFIYEALEKLFELSEAYPINMHNDLELLTQYSCNCVEPHNPSNGTLKEWRESNISASDIIWENLTVSECKSLHGEYVGRACGHDHPYVPDVLFWSVILFFSTVTLSATLKQFKTSRYFPTKVRSIVSDFAVFLTILCMVLIDYAIGIPSPKLQVPSVFKPTRDDRGWFVTPLGPNPWWTVIAAIIPALLCTILIFMDQQITAVIINRKEHKLKKGCGYHLDLLMVAVMLGVCSIMGLPWFVAATVLSITHVNSLKLESECSAPGEQPKFLGIREQRVTGLMIFILMGSSVFMTSILKFIPMPVLYGVFLYMGASSLKGIQFFDRIKLFWMPAKHQPDFIYLRHVPLRKVHLFTIIQMSCLGLLWIIKVSRAAIVFPMMVLALVFVRKLMDLLFTKRELSWLDDLMPESKKKKLEDAEKEEEQSMLAMEDEGTVQLPLEGHYRDDPSVINISDEMSKTALWRNLLITADNSKDKESSFPSKSSPS.

4 disordered regions span residues Met1 to Val23, Gly58 to Ser96, Lys245 to Gln312, and Asn457 to Leu476. Residues Met1–Cys509 lie on the Cytoplasmic side of the membrane. The segment covering Arg59–Asp76 has biased composition (basic residues). Positions Arg77 to Pro90 are enriched in basic and acidic residues. Position 89 is a phosphoserine (Ser89). Position 94 is a phosphothreonine (Thr94). The segment covering Glu248–Ser264 has biased composition (polar residues). At Ser276 the chain carries Phosphoserine. A helical membrane pass occupies residues Leu510–Leu530. Topologically, residues Leu531–Arg538 are extracellular. A helical transmembrane segment spans residues Ile539–Gly559. The Cytoplasmic portion of the chain corresponds to Gly560–Pro562. A helical transmembrane segment spans residues Leu563–Cys583. Topologically, residues Lys584 to Ser596 are extracellular. Residues Ile597–Val617 form a helical membrane-spanning segment. At Cys618–Glu626 the chain is on the cytoplasmic side. Residues Ala627–Leu647 traverse the membrane as a helical segment. Over Ser648 to Pro720 the chain is Extracellular. Asn674, Asn677, Asn687, and Asn697 each carry an N-linked (GlcNAc...) asparagine glycan. A helical transmembrane segment spans residues Tyr721 to Ala741. The Cytoplasmic segment spans residues Thr742–Asp762. The chain crosses the membrane as a helical span at residues Phe763–Ser783. Residues Pro784–Asn809 are Extracellular-facing. The helical transmembrane segment at Pro810 to Met830 threads the bilayer. The Cytoplasmic segment spans residues Asp831–Asp855. The chain crosses the membrane as a helical span at residues Leu856–Ala876. Residues Ala877–Thr912 lie on the Extracellular side of the membrane. Residues Gly913 to Ile933 form a helical membrane-spanning segment. Residues Pro934–Met935 are Cytoplasmic-facing. The chain crosses the membrane as a helical span at residues Pro936–Phe956. At Asp957–Trp998 the chain is on the extracellular side. Residues Ile999 to Val1019 traverse the membrane as a helical segment. Residues Arg1020–Ser1118 are Cytoplasmic-facing. A phosphoserine mark is found at Ser1057 and Ser1085.

This sequence belongs to the anion exchanger (TC 2.A.31) family. In terms of tissue distribution, predominantly expressed in the brain.

The protein localises to the basolateral cell membrane. It localises to the apical cell membrane. It is found in the cell projection. Its subcellular location is the dendrite. The protein resides in the axon. The protein localises to the perikaryon. It localises to the presynapse. It is found in the postsynapse. The enzyme catalyses 2 hydrogencarbonate(out) + chloride(in) + Na(+)(out) = 2 hydrogencarbonate(in) + chloride(out) + Na(+)(in). Its function is as follows. Sodium/bicarbonate cotransporter which plays an important role in regulating intracellular pH. Has been shown to act as a sodium/bicarbonate cotransporter in exchange for intracellular chloride. Has also been shown to act as a sodium/biocarbonate cotransporter which does not couple net influx of bicarbonate to net efflux of chloride, with the observed chloride efflux being due to chloride self-exchange. Controls neuronal pH and may contribute to the secretion of cerebrospinal fluid. Acting on presynaptic intracellular pH, it promotes GABA release, reduces the excitability of CA1 pyramidal neurons, and modulates short-term synaptic plasticity. Required in retinal cells to maintain normal pH which is necessary for normal vision. In the kidney, likely to mediate bicarbonate reclamation in the apical membrane of the proximal tubules. The sequence is that of Sodium-driven chloride bicarbonate exchanger from Homo sapiens (Human).